Here is a 184-residue protein sequence, read N- to C-terminus: Ras-related protein Rap-1b (184 aa).

Gly-10–Ala-18 contributes to the GTP binding site. An interaction with KRIT1 region spans residues Gln-25–Met-67. The Effector region motif lies at Tyr-32–Tyr-40. GTP is bound by residues Asp-57–Thr-61, Asn-116–Asp-119, and Ser-147–Lys-149. At Ser-179 the chain carries Phosphoserine; by PKA. Position 181 is a cysteine methyl ester (Cys-181). A lipid anchor (S-geranylgeranyl cysteine) is attached at Cys-181. A propeptide spans Gln-182 to Leu-184 (removed in mature form).

As to quaternary structure, heterodimer with RAP1GAP. Interacts with EPAC2. Interacts with SGSM1. Interacts with SGSM2. Interacts with SGSM3. Interacts with KRIT1. Interacts with RAP1GDS1.

Its subcellular location is the cell membrane. The protein localises to the cytoplasm. It localises to the cytosol. It is found in the cell junction. The enzyme catalyses GTP + H2O = GDP + phosphate + H(+). Activated by guanine nucleotide-exchange factor (GEF) EPAC2 in a cAMP-dependent manner. Its function is as follows. GTP-binding protein that possesses intrinsic GTPase activity. Contributes to the polarizing activity of KRIT1 and CDH5 in the establishment and maintenance of correct endothelial cell polarity and vascular lumen. Required for the localization of phosphorylated PRKCZ, PARD3 and TIAM1 to the cell junction. Plays a role in the establishment of basal endothelial barrier function. The polypeptide is Ras-related protein Rap-1b (RAP1B) (Bos taurus (Bovine)).